A 317-amino-acid polypeptide reads, in one-letter code: MEPRYPFVAVDVPEPEADEIGALLFELGASGVEQRDEQTLVRGARSGQVTLVASFEDHGEAMEAIAALGEQSPPLAARLEEVVGDAWRDAWKEHFAPFALTPTITVVPPWAERAPEREGERVLLLEPGRAFGTGLHATTALVAELLDEHAAELRGREILDVGTGSGILALVALLLGAERAVAIDNDEDVIEVVLENAARNGLEGRIEASAGVVEAVTRRFPWVVANIEARVLRPLAPELARVLEPGGWLILSGILESERDDLIARYTSLPRPLEHVATRPDPASPGGDRRAGRGDAGGEGWVAILFRAPGGAASSPG.

S-adenosyl-L-methionine is bound by residues T139, G162, D184, and N226. Residues 274–297 (EHVATRPDPASPGGDRRAGRGDAG) form a disordered region.

This sequence belongs to the methyltransferase superfamily. PrmA family.

The protein resides in the cytoplasm. It carries out the reaction L-lysyl-[protein] + 3 S-adenosyl-L-methionine = N(6),N(6),N(6)-trimethyl-L-lysyl-[protein] + 3 S-adenosyl-L-homocysteine + 3 H(+). Methylates ribosomal protein L11. This Sorangium cellulosum (strain So ce56) (Polyangium cellulosum (strain So ce56)) protein is Ribosomal protein L11 methyltransferase.